Here is a 628-residue protein sequence, read N- to C-terminus: Biosynthetic arginine decarboxylase (628 aa).

Lys-99 is subject to N6-(pyridoxal phosphate)lysine. Substrate is bound at residue 279 to 289 (VDVGGGLGIDY).

It belongs to the Orn/Lys/Arg decarboxylase class-II family. SpeA subfamily. Mg(2+) is required as a cofactor. It depends on pyridoxal 5'-phosphate as a cofactor.

The catalysed reaction is L-arginine + H(+) = agmatine + CO2. Functionally, catalyzes the biosynthesis of agmatine from arginine. This is Biosynthetic arginine decarboxylase from Xanthomonas campestris pv. campestris (strain ATCC 33913 / DSM 3586 / NCPPB 528 / LMG 568 / P 25).